Reading from the N-terminus, the 377-residue chain is Deoxyribonuclease CdiA-o11 (377 aa).

The short motif at 81–84 is the VENN CT cleavage motif element; the sequence is VENN. An inner membrane translocation domain (IMTD), targets to YciB region spans residues 85–233; that stretch reads YLSTNQSLTF…ISFMSRNTAT (149 aa). The CT domain, sufficient to interact with CdiI stretch occupies residues 88–377; it reads TNQSLTFDKE…GVKVTVTQVK (290 aa). Positions 222–377 are has DNase activity in vivo, cannot be expressed in the absence of CdiI; it reads AAISFMSRNT…GVKVTVTQVK (156 aa). Active-site residues include Glu-257, Asp-278, Ser-289, and Lys-291. 2 residues coordinate Zn(2+): Glu-257 and Asp-278.

In terms of assembly, interacts with cognate immunity protein CdiI-o11-EC869, which blocks its toxic DNase activity. Requires Zn(2+) as cofactor.

Its subcellular location is the target cell. The protein localises to the target cell cytoplasm. Toxic component of a toxin-immunity protein module, which functions as a cellular contact-dependent growth inhibition (CDI) system. CDI modules allow bacteria to communicate with and inhibit the growth of closely related neighboring bacteria in a contact-dependent fashion. The C-terminal 289 residues (the CT fragment) has a strong DNase activity in the presence of Zn(2+), completely degrading supercoiled and linear plasmids, and inhibits growth. In the presence of Mg(2+) it nicks dsDNA. Toxic activity is neutralized by coexpression of the cognate immunity protein CdiI-o11-EC869, but not by non-cognate immunity proteins from other toxin-immunity modules or other strains of E.coli. Gains access to the cytoplasm of target cells by using integral inner membrane protein YciB. Functionally, expression of this locus confers protection against other bacteria carrying the locus. This Escherichia coli O157:H7 (strain EC869) protein is Deoxyribonuclease CdiA-o11 (cdiA4).